Reading from the N-terminus, the 350-residue chain is Hepatocyte nuclear factor 3-gamma (350 aa).

Residues 116-207 (AKPPYSYISL…GNMFENGCYL (92 aa)) constitute a DNA-binding region (fork-head). Residues 217 to 276 (EKVKKGGSGAATTTRNGTGSAASTTTPAATVTSPPQPPPPAPEPEAQGGEDVGALDCGSP) are disordered. The span at 226–249 (AATTTRNGTGSAASTTTPAATVTS) shows a compositional bias: low complexity. Positions 250-259 (PPQPPPPAPE) are enriched in pro residues.

In terms of assembly, interacts with FOXA2. As to expression, expressed in erythroleukemia and hepatoma cell lines and in liver and pancreas. Not expressed in any other cell lines or tissues examined.

It is found in the nucleus. Transcription factor that is thought to act as a 'pioneer' factor opening the compacted chromatin for other proteins through interactions with nucleosomal core histones and thereby replacing linker histones at target enhancer and/or promoter sites. Originally described as a transcription activator for a number of liver genes such as AFP, albumin, tyrosine aminotransferase, PEPCK, etc. Interacts with the cis-acting regulatory regions of these genes. Involved in glucose homeostasis; binds to and activates transcription from the G6PC1 promoter. Binds to the CYP3A4 promoter and activates its transcription in cooperation with CEBPA. Binds to the CYP3A7 promoter together with members of the CTF/NF-I family. Involved in regulation of neuronal-specific transcription. May be involved in regulation of spermatogenesis. The protein is Hepatocyte nuclear factor 3-gamma (FOXA3) of Homo sapiens (Human).